A 396-amino-acid polypeptide reads, in one-letter code: Elongation factor Tu (396 aa).

The 196-residue stretch at 10 to 205 folds into the tr-type G domain; the sequence is KPHVNIGTIG…AVDESIPDPV (196 aa). The interval 19–26 is G1; that stretch reads GHVDHGKT. 19–26 contributes to the GTP binding site; that stretch reads GHVDHGKT. Position 26 (Thr26) interacts with Mg(2+). The segment at 62-66 is G2; the sequence is GITIN. Residues 83-86 are G3; that stretch reads DAPG. GTP-binding positions include 83 to 87 and 138 to 141; these read DAPGH and NKAD. The tract at residues 138-141 is G4; the sequence is NKAD. Residues 175–177 are G5; that stretch reads SAL.

This sequence belongs to the TRAFAC class translation factor GTPase superfamily. Classic translation factor GTPase family. EF-Tu/EF-1A subfamily. In terms of assembly, monomer.

It localises to the cytoplasm. It carries out the reaction GTP + H2O = GDP + phosphate + H(+). In terms of biological role, GTP hydrolase that promotes the GTP-dependent binding of aminoacyl-tRNA to the A-site of ribosomes during protein biosynthesis. This Mycolicibacterium gilvum (strain PYR-GCK) (Mycobacterium gilvum (strain PYR-GCK)) protein is Elongation factor Tu.